The primary structure comprises 248 residues: Probable transcriptional regulatory protein BOV_1660 (248 aa).

Belongs to the TACO1 family.

It localises to the cytoplasm. The sequence is that of Probable transcriptional regulatory protein BOV_1660 from Brucella ovis (strain ATCC 25840 / 63/290 / NCTC 10512).